The chain runs to 357 residues: N-methyltransferase dtpB (357 aa).

This sequence belongs to the methyltransferase superfamily.

The protein operates within alkaloid biosynthesis. N-methyltransferase; part of the gene cluster that mediates the biosynthesis of the dimeric diketopiperazine alkaloid ditryptophenaline. The nonribosomal peptide synthase dtpA accepts L-tryptophan and L-phenylalanine as its substrates and forms the phenylalanyl-tryptophanyl cyclic dipeptide product cyclophenylalanyltryptophenyl. The N-methyltransferase dtpB is responsible for the N-methylation of cyclophenylalanyltryptophenyl to yield cyclo-N-methylphenylalanyltryptophenyl. The cytochrome P450 monooxygenase is responsible not only for pyrroloindole ring formation but also for concurrent dimerization of N-methylphenylalanyltryptophanyl diketopiperazine monomers into a homodimeric product. The protein is N-methyltransferase dtpB of Aspergillus flavus (strain ATCC 200026 / FGSC A1120 / IAM 13836 / NRRL 3357 / JCM 12722 / SRRC 167).